The sequence spans 336 residues: Biotin synthase (336 aa).

Positions 57 to 286 (HHGKSIDLCS…RAIVRTAGGR (230 aa)) constitute a Radical SAM core domain. [4Fe-4S] cluster-binding residues include Cys75, Cys79, and Cys82. Positions 119, 151, 211, and 281 each coordinate [2Fe-2S] cluster.

Belongs to the radical SAM superfamily. Biotin synthase family. Homodimer. Requires [4Fe-4S] cluster as cofactor. [2Fe-2S] cluster serves as cofactor.

It carries out the reaction (4R,5S)-dethiobiotin + (sulfur carrier)-SH + 2 reduced [2Fe-2S]-[ferredoxin] + 2 S-adenosyl-L-methionine = (sulfur carrier)-H + biotin + 2 5'-deoxyadenosine + 2 L-methionine + 2 oxidized [2Fe-2S]-[ferredoxin]. Its pathway is cofactor biosynthesis; biotin biosynthesis; biotin from 7,8-diaminononanoate: step 2/2. Catalyzes the conversion of dethiobiotin (DTB) to biotin by the insertion of a sulfur atom into dethiobiotin via a radical-based mechanism. The protein is Biotin synthase of Desulfotalea psychrophila (strain LSv54 / DSM 12343).